The chain runs to 1146 residues: Activator of SKN7 protein 10 (1146 aa).

The segment covering 1–15 (MSDYFSSRPSQTLTP) has biased composition (polar residues). Disordered regions lie at residues 1–32 (MSDY…ASSI) and 171–194 (ITDP…KVGL). S344 carries the post-translational modification Phosphoserine. Positions 482–606 (CIKAGYFLKK…DCTLKDASST (125 aa)) constitute a PH domain. The disordered stretch occupies residues 553-575 (NNHHRQASDVHNSSTTTGGTAGA). A compositionally biased stretch (low complexity) spans 564–575 (NSSTTTGGTAGA). S793 carries the post-translational modification Phosphoserine. A Phosphothreonine modification is found at T808. 2 disordered regions span residues 835 to 854 (MATS…PQSM) and 909 to 982 (PVNS…TAMR). Low complexity predominate over residues 912 to 924 (SPGSSNSESSSGG). Residues 939–950 (YTQRNSEGSSPC) are compositionally biased toward polar residues. A Phosphoserine modification is found at S944. The span at 958 to 968 (QQQQPLQMQPL) shows a compositional bias: low complexity. S969 carries the phosphoserine modification. Over residues 969-982 (SRTSSSSVNVTAMR) the composition is skewed to polar residues. T1017 is modified (phosphothreonine). S1070, S1095, and S1098 each carry phosphoserine. The interval 1124 to 1146 (GIQEDDGDSTNNDTIKLNQSIYS) is disordered. Positions 1132 to 1146 (STNNDTIKLNQSIYS) are enriched in polar residues.

The protein belongs to the RGC1 family. As to quaternary structure, component of the RNA polymerase II holoenzyme. Interacts with RPO21 and SSN8. In terms of processing, phosphorylated in response to various stresses. stress-induced phosphorylation is partially dependent on HOG1.

The protein resides in the cytoplasm. In terms of biological role, positive regulator of FPS1 glycerol channel required for the glycerol efflux. As a component of the RNA polymerase II holoenzyme, is required for SSN8 destruction in response to oxidative stress but not heat shock. Required for cell survival in response to heat shock independent of SSN8. The protein is Activator of SKN7 protein 10 (ASK10) of Saccharomyces cerevisiae (strain ATCC 204508 / S288c) (Baker's yeast).